We begin with the raw amino-acid sequence, 161 residues long: Cytochrome c-type biogenesis protein CcmE (161 aa).

Topologically, residues 1-8 are cytoplasmic; that stretch reads MNPRRKKR. The chain crosses the membrane as a helical; Signal-anchor for type II membrane protein span at residues 9 to 29; sequence LTLAIALIGGVAAIASLLLYA. The Periplasmic segment spans residues 30 to 161; that stretch reads LNSNLNLFYT…DYSQQKSAAQ (132 aa). Residues histidine 131 and tyrosine 135 each contribute to the heme site. A disordered region spans residues 138-161; that stretch reads PEVAEAMGQKHEKLDYSQQKSAAQ.

It belongs to the CcmE/CycJ family.

Its subcellular location is the cell inner membrane. Its function is as follows. Heme chaperone required for the biogenesis of c-type cytochromes. Transiently binds heme delivered by CcmC and transfers the heme to apo-cytochromes in a process facilitated by CcmF and CcmH. This is Cytochrome c-type biogenesis protein CcmE from Shewanella sp. (strain MR-4).